The chain runs to 77 residues: U14-theraphotoxin-Cg1b (77 aa).

The N-terminal stretch at 1–21 (MKTSVLLVILGIAAITVQCTA) is a signal peptide. A propeptide spanning residues 22-49 (SESVEQDSLRTFVDAVLGWNAEMASEAR) is cleaved from the precursor. 3 disulfides stabilise this stretch: cysteine 50-cysteine 64, cysteine 57-cysteine 69, and cysteine 63-cysteine 75.

This sequence belongs to the neurotoxin 10 (Hwtx-1) family. 65 (Jztx-21) subfamily. As to expression, expressed by the venom gland.

It is found in the secreted. Its function is as follows. Probable ion channel inhibitor. The chain is U14-theraphotoxin-Cg1b from Chilobrachys guangxiensis (Chinese earth tiger tarantula).